Consider the following 394-residue polypeptide: Protein TsgA homolog (394 aa).

12 helical membrane passes run 11 to 31, 51 to 71, 78 to 98, 101 to 121, 134 to 154, 162 to 182, 206 to 226, 250 to 270, 273 to 293, 297 to 317, 332 to 352, and 361 to 381; these read WISF…GMVM, FLNA…EIVP, FGFV…SIAL, VSMF…TFLI, LLFT…VAAV, WYWV…LTFG, IGVL…LGFI, FWMS…FFDL, ILTV…NGAP, AWFI…IITL, FVLT…GPIV, and LQTA…LGFV.

Belongs to the major facilitator superfamily. TsgA family.

The protein resides in the cell inner membrane. This Enterobacter sp. (strain 638) protein is Protein TsgA homolog.